The sequence spans 400 residues: Tryptophan synthase beta chain (400 aa).

At K92 the chain carries N6-(pyridoxal phosphate)lysine.

The protein belongs to the TrpB family. As to quaternary structure, tetramer of two alpha and two beta chains. It depends on pyridoxal 5'-phosphate as a cofactor.

It carries out the reaction (1S,2R)-1-C-(indol-3-yl)glycerol 3-phosphate + L-serine = D-glyceraldehyde 3-phosphate + L-tryptophan + H2O. Its pathway is amino-acid biosynthesis; L-tryptophan biosynthesis; L-tryptophan from chorismate: step 5/5. Functionally, the beta subunit is responsible for the synthesis of L-tryptophan from indole and L-serine. The protein is Tryptophan synthase beta chain of Neisseria meningitidis serogroup A / serotype 4A (strain DSM 15465 / Z2491).